Reading from the N-terminus, the 320-residue chain is Malate dehydrogenase (320 aa).

Residues glycine 10–glycine 15 and aspartate 34 contribute to the NAD(+) site. Positions 83 and 89 each coordinate substrate. NAD(+) contacts are provided by residues asparagine 96 and isoleucine 119 to asparagine 121. Substrate-binding residues include asparagine 121 and arginine 152. Histidine 176 serves as the catalytic Proton acceptor.

Belongs to the LDH/MDH superfamily. MDH type 3 family.

The catalysed reaction is (S)-malate + NAD(+) = oxaloacetate + NADH + H(+). Functionally, catalyzes the reversible oxidation of malate to oxaloacetate. The sequence is that of Malate dehydrogenase from Brucella canis (strain ATCC 23365 / NCTC 10854 / RM-666).